We begin with the raw amino-acid sequence, 117 residues long: Small ribosomal subunit protein bS18c (117 aa).

The disordered stretch occupies residues 86–117 (SELTPRTNALKARNKNKQNKYQNNQTKFLSNF).

The protein belongs to the bacterial ribosomal protein bS18 family. In terms of assembly, part of the 30S ribosomal subunit.

The protein resides in the plastid. The chain is Small ribosomal subunit protein bS18c from Cuscuta exaltata (Tall dodder).